We begin with the raw amino-acid sequence, 388 residues long: Galactokinase (388 aa).

33–36 provides a ligand contact to substrate; it reads EHTD. ATP contacts are provided by residues Ser67 and 125–131; that span reads GAGLSSS. Residues Ser131 and Glu163 each contribute to the Mg(2+) site. Asp175 acts as the Proton acceptor in catalysis. Tyr225 is a substrate binding site.

It belongs to the GHMP kinase family. GalK subfamily.

It is found in the cytoplasm. It catalyses the reaction alpha-D-galactose + ATP = alpha-D-galactose 1-phosphate + ADP + H(+). The protein operates within carbohydrate metabolism; galactose metabolism. In terms of biological role, catalyzes the transfer of the gamma-phosphate of ATP to D-galactose to form alpha-D-galactose-1-phosphate (Gal-1-P). The protein is Galactokinase of Limosilactobacillus fermentum (strain NBRC 3956 / LMG 18251) (Lactobacillus fermentum).